A 199-amino-acid chain; its full sequence is 3-isopropylmalate dehydratase small subunit (199 aa).

It belongs to the LeuD family. LeuD type 1 subfamily. As to quaternary structure, heterodimer of LeuC and LeuD.

It catalyses the reaction (2R,3S)-3-isopropylmalate = (2S)-2-isopropylmalate. Its pathway is amino-acid biosynthesis; L-leucine biosynthesis; L-leucine from 3-methyl-2-oxobutanoate: step 2/4. Catalyzes the isomerization between 2-isopropylmalate and 3-isopropylmalate, via the formation of 2-isopropylmaleate. This chain is 3-isopropylmalate dehydratase small subunit, found in Mycobacteroides abscessus (strain ATCC 19977 / DSM 44196 / CCUG 20993 / CIP 104536 / JCM 13569 / NCTC 13031 / TMC 1543 / L948) (Mycobacterium abscessus).